Reading from the N-terminus, the 216-residue chain is Uracil-DNA glycosylase (216 aa).

Catalysis depends on Asp59, which acts as the Proton acceptor.

This sequence belongs to the uracil-DNA glycosylase (UDG) superfamily. UNG family.

It is found in the cytoplasm. The enzyme catalyses Hydrolyzes single-stranded DNA or mismatched double-stranded DNA and polynucleotides, releasing free uracil.. Functionally, excises uracil residues from the DNA which can arise as a result of misincorporation of dUMP residues by DNA polymerase or due to deamination of cytosine. The chain is Uracil-DNA glycosylase from Staphylococcus epidermidis (strain ATCC 35984 / DSM 28319 / BCRC 17069 / CCUG 31568 / BM 3577 / RP62A).